A 337-amino-acid polypeptide reads, in one-letter code: Vacuolar protein sorting-associated protein 26B (337 aa).

Residues 311–337 (SQRFEGTSHPETRPQHSGAAAVEQEQE) form a disordered region.

This sequence belongs to the VPS26 family. In terms of assembly, component of the heterotrimeric retromer cargo-selective complex (CSC) which is believed to associate with variable sorting nexins to form functionally distinct retromer complex variants.

It localises to the cytoplasm. The protein resides in the membrane. The protein localises to the endosome. Functionally, acts as a component of the retromer cargo-selective complex (CSC). The CSC is believed to be the core functional component of retromer or respective retromer complex variants acting to prevent missorting of selected transmembrane cargo proteins into the lysosomal degradation pathway. Retromer mediates retrograde transport of cargo proteins from endosomes to the trans-Golgi network (TGN). This is Vacuolar protein sorting-associated protein 26B (vps26b) from Xenopus tropicalis (Western clawed frog).